A 31-amino-acid chain; its full sequence is L-amino-acid oxidase (31 aa).

The protein belongs to the flavin monoamine oxidase family. FIG1 subfamily. As to quaternary structure, homodimer; non-covalently linked. It depends on FAD as a cofactor. Post-translationally, N-glycosylated. Expressed by the venom gland.

It localises to the secreted. It catalyses the reaction an L-alpha-amino acid + O2 + H2O = a 2-oxocarboxylate + H2O2 + NH4(+). It carries out the reaction L-leucine + O2 + H2O = 4-methyl-2-oxopentanoate + H2O2 + NH4(+). The catalysed reaction is L-phenylalanine + O2 + H2O = 3-phenylpyruvate + H2O2 + NH4(+). The enzyme catalyses L-histidine + O2 + H2O = 3-(imidazol-5-yl)pyruvate + H2O2 + NH4(+). Its function is as follows. Catalyzes an oxidative deamination of predominantly hydrophobic and aromatic L-amino acids, thus producing hydrogen peroxide that may contribute to the diverse toxic effects of this enzyme. Is moderately active on L-Leu, L-His, and L-Phe, and very weakly active on L-Thr, and L-Cys. Exhibits diverse biological activities, such as hemorrhage, hemolysis, edema, antibacterial and antiparasitic activities, as well as regulation of platelet aggregation. Its effect on platelets is controversial, since it either induces aggregation or inhibits agonist-induced aggregation. These different effects are probably due to different experimental conditions. Inhibits growth of B.subtilis strain ATCC 6633 (MIC=32 uM), E.faecalis strain ATCC 12953 (MIC=32 uM), S.aureus strain ATCC 29213 (MIC=32 uM), S.pyogenes strain ATCC 19615 (MIC=8 uM), E.coli strain ATCC 8739 (MIC=4 uM), K.pneumoniae strain ATCC 13885 (MIC=2 uM), P.mirabilis strain ATCC 25933 (MIC=2 uM), P.aeruginosa strain ATCC 15442 (MIC=8 uM) and S.typhimurium strain ATCC 14028 (MIC=8 uM). The polypeptide is L-amino-acid oxidase (Bothrops mattogrossensis (Pitviper)).